The primary structure comprises 244 residues: Ureidoacrylate amidohydrolase RutB (244 aa).

The active-site Proton acceptor is the Asp-38. Residue Lys-147 is part of the active site. Cys-180 acts as the Nucleophile in catalysis.

Belongs to the isochorismatase family. RutB subfamily.

The enzyme catalyses (Z)-3-ureidoacrylate + H2O + H(+) = (Z)-3-aminoacrylate + NH4(+) + CO2. It carries out the reaction (Z)-3-ureidoacrylate + H2O = (Z)-3-aminoacrylate + carbamate + H(+). It catalyses the reaction (Z)-2-methylureidoacrylate + H2O + H(+) = (Z)-2-methylaminoacrylate + NH4(+) + CO2. In terms of biological role, hydrolyzes ureidoacrylate to form aminoacrylate and carbamate. The carbamate hydrolyzes spontaneously, thereby releasing one of the nitrogen atoms of the pyrimidine ring as ammonia and one of its carbon atoms as CO2. This is Ureidoacrylate amidohydrolase RutB from Escherichia coli O55:H7 (strain CB9615 / EPEC).